The following is a 159-amino-acid chain: Large ribosomal subunit protein uL10 (159 aa).

The protein belongs to the universal ribosomal protein uL10 family. In terms of assembly, part of the ribosomal stalk of the 50S ribosomal subunit. The N-terminus interacts with L11 and the large rRNA to form the base of the stalk. The C-terminus forms an elongated spine to which L12 dimers bind in a sequential fashion forming a multimeric L10(L12)X complex.

Forms part of the ribosomal stalk, playing a central role in the interaction of the ribosome with GTP-bound translation factors. The chain is Large ribosomal subunit protein uL10 (rplJ) from Campylobacter jejuni subsp. jejuni serotype O:2 (strain ATCC 700819 / NCTC 11168).